A 221-amino-acid polypeptide reads, in one-letter code: Leucine rich adaptor protein 1-like (221 aa).

Methionine 1 bears the N-acetylmethionine mark. Residues 24-81 are disordered; it reads LARSLRGEELAPREGAADPSGVGGSCSSSSSCSSFAPSVSSSSSSSPASGSPRRSHPS. Positions 28-39 are enriched in basic and acidic residues; it reads LRGEELAPREGA. The segment covering 48–75 has biased composition (low complexity); the sequence is SCSSSSSCSSFAPSVSSSSSSSPASGSP.

This Mus musculus (Mouse) protein is Leucine rich adaptor protein 1-like (Lurap1l).